A 257-amino-acid chain; its full sequence is ECF RNA polymerase sigma factor SigE (257 aa).

The sigma-70 factor domain-2 stretch occupies residues 87 to 153 (MPSWDELVRQ…RITTNLFLDM (67 aa)). Residues 111-114 (NQHD) carry the Polymerase core binding motif. Residues 186–236 (SRLGADLQAALDSLPPEFRAAVVLCDIEGLSYEEIGATLGVKLGTVRSRIH) form a sigma-70 factor domain-4 region. The segment at residues 211–230 (DIEGLSYEEIGATLGVKLGT) is a DNA-binding region (H-T-H motif).

This sequence belongs to the sigma-70 factor family. ECF subfamily. As to quaternary structure, interacts transiently with the RNA polymerase catalytic core formed by RpoA, RpoB, RpoC and RpoZ (2 alpha, 1 beta, 1 beta' and 1 omega subunit) to form the RNA polymerase holoenzyme that can initiate transcription. Interacts (via sigma-70 factor domain 4) with RseA; interaction is abrogated by treatment of cells with H(2)O(2) or detergent.

Functionally, sigma factors are initiation factors that promote the attachment of RNA polymerase to specific initiation sites and are then released. Extracytoplasmic function (ECF) sigma factors are held in an inactive form by an anti-sigma factor until released. The polypeptide is ECF RNA polymerase sigma factor SigE (sigE) (Mycolicibacterium smegmatis (strain ATCC 700084 / mc(2)155) (Mycobacterium smegmatis)).